The following is a 361-amino-acid chain: Phosphoserine aminotransferase (361 aa).

Arg42 is a binding site for L-glutamate. Residues 76-77 (AR), Trp102, Thr153, Asp173, and Gln196 contribute to the pyridoxal 5'-phosphate site. Lys197 is modified (N6-(pyridoxal phosphate)lysine). 238–239 (NT) is a pyridoxal 5'-phosphate binding site.

The protein belongs to the class-V pyridoxal-phosphate-dependent aminotransferase family. SerC subfamily. As to quaternary structure, homodimer. The cofactor is pyridoxal 5'-phosphate.

The protein resides in the cytoplasm. It carries out the reaction O-phospho-L-serine + 2-oxoglutarate = 3-phosphooxypyruvate + L-glutamate. It catalyses the reaction 4-(phosphooxy)-L-threonine + 2-oxoglutarate = (R)-3-hydroxy-2-oxo-4-phosphooxybutanoate + L-glutamate. The protein operates within amino-acid biosynthesis; L-serine biosynthesis; L-serine from 3-phospho-D-glycerate: step 2/3. It participates in cofactor biosynthesis; pyridoxine 5'-phosphate biosynthesis; pyridoxine 5'-phosphate from D-erythrose 4-phosphate: step 3/5. In terms of biological role, catalyzes the reversible conversion of 3-phosphohydroxypyruvate to phosphoserine and of 3-hydroxy-2-oxo-4-phosphonooxybutanoate to phosphohydroxythreonine. The chain is Phosphoserine aminotransferase from Buchnera aphidicola subsp. Acyrthosiphon pisum (strain 5A).